The sequence spans 126 residues: Nascent polypeptide-associated complex protein (126 aa).

The region spanning 10–77 (PRMMKQMQKM…AKKVAKEEEK (68 aa)) is the NAC-A/B domain.

This sequence belongs to the NAC-alpha family. Homodimer. Interacts with the ribosome. Binds ribosomal RNA.

Contacts the emerging nascent chain on the ribosome. This Methanococcus maripaludis (strain DSM 14266 / JCM 13030 / NBRC 101832 / S2 / LL) protein is Nascent polypeptide-associated complex protein.